Reading from the N-terminus, the 1156-residue chain is Chromosome partition protein Smc (1156 aa).

37–44 (PNGAGKSN) contributes to the ATP binding site. Residues 167-499 (SGIGEYERKK…AIEREVRSFS (333 aa)) are a coiled coil. The SMC hinge domain occupies 509–624 (KGVYGSVSEL…VENFESAKAI (116 aa)). A coiled-coil region spans residues 654-1001 (GELNKRYYEE…EETENKKRKV (348 aa)).

This sequence belongs to the SMC family. Homodimer.

It localises to the cytoplasm. In terms of biological role, required for chromosome condensation and partitioning. The protein is Chromosome partition protein Smc of Aquifex aeolicus (strain VF5).